Here is a 619-residue protein sequence, read N- to C-terminus: Alpha-(1,6)-fucosyltransferase (619 aa).

Residues 1–17 (MLLVRQLFGASANSWAR) lie on the Cytoplasmic side of the membrane. The helical; Signal-anchor for type II membrane protein transmembrane segment at 18 to 38 (ALIIFVLAWIGLVYVFVVKLT) threads the bilayer. Residues 39–619 (NTQGQQAAGE…TAKLPLYAGI (581 aa)) are Lumenal-facing. Intrachain disulfides connect Cys253–Cys315, Cys261–Cys279, and Cys267–Cys271. Residues 255 to 539 (NARKLVCKLN…PDAAHRFKSL (285 aa)) form the GT23 domain. Residues 345 to 351 (PRPPYLP) carry the SH3-binding motif. The important for donor substrate binding stretch occupies residues 411-412 (RR). A disulfide bridge links Cys511 with Cys518. The region spanning 548–609 (QNAHNRRVVI…PSFKVEEKVD (62 aa)) is the SH3 domain.

It belongs to the glycosyltransferase 23 family. Mn(2+) is required as a cofactor. It depends on Mg(2+) as a cofactor.

The protein resides in the golgi apparatus. The protein localises to the golgi stack membrane. It catalyses the reaction N(4)-{beta-D-GlcNAc-(1-&gt;2)-alpha-D-Man-(1-&gt;3)-[beta-D-GlcNAc-(1-&gt;2)-alpha-D-Man-(1-&gt;6)]-beta-D-Man-(1-&gt;4)-beta-D-GlcNAc-(1-&gt;4)-beta-D-GlcNAc}-L-asparaginyl-[protein] + GDP-beta-L-fucose = an N(4)-{beta-D-GlcNAc-(1-&gt;2)-alpha-D-Man-(1-&gt;3)-[beta-D-GlcNAc-(1-&gt;2)-alpha-D-Man-(1-&gt;6)]-beta-D-Man-(1-&gt;4)-beta-D-GlcNAc-(1-&gt;4)-[alpha-L-Fuc-(1-&gt;6)]-beta-D-GlcNAc}-L-asparaginyl-[protein] + GDP + H(+). It participates in protein modification; protein glycosylation. Its function is as follows. Catalyzes the addition of fucose in alpha 1-6 linkage to the first GlcNAc residue, next to the peptide chains in N-glycans. The addition is prevented if the GlcNAc residue is already fucosylated. This chain is Alpha-(1,6)-fucosyltransferase (FucT6), found in Drosophila melanogaster (Fruit fly).